We begin with the raw amino-acid sequence, 399 residues long: Pyridinium-3,5-bisthiocarboxylic acid mononucleotide nickel insertion protein (399 aa).

This sequence belongs to the LarC family.

The enzyme catalyses Ni(II)-pyridinium-3,5-bisthiocarboxylate mononucleotide = pyridinium-3,5-bisthiocarboxylate mononucleotide + Ni(2+). Functionally, involved in the biosynthesis of a nickel-pincer cofactor ((SCS)Ni(II) pincer complex). Binds Ni(2+), and functions in nickel delivery to pyridinium-3,5-bisthiocarboxylic acid mononucleotide (P2TMN), to form the mature cofactor. Is thus probably required for the activation of nickel-pincer cofactor-dependent enzymes. The polypeptide is Pyridinium-3,5-bisthiocarboxylic acid mononucleotide nickel insertion protein (Clostridium kluyveri (strain ATCC 8527 / DSM 555 / NBRC 12016 / NCIMB 10680 / K1)).